We begin with the raw amino-acid sequence, 164 residues long: DNA-directed RNA polymerase 19 kDa subunit (164 aa).

Acidic residues predominate over residues 1–35 (MADTDDIIDYESDDLTEYEDDEEEEEDGESLETSD). The disordered stretch occupies residues 1–39 (MADTDDIIDYESDDLTEYEDDEEEEEDGESLETSDIDPK).

This sequence belongs to the poxviridae DNA-directed RNA polymerase 19 kDa subunit family. As to quaternary structure, the DNA-dependent RNA polymerase used for intermediate and late genes expression consists of eight subunits Rpo30/OPG66, Rpo7/OPG90, Rpo22/OPG103, Rpo147/OPG105, Rpo18/OPG119, Rpo19/OPG131, Rpo132/OPG151 and Rpo35/OPG156. The same holoenzyme, with the addition of the transcription-specificity factor OPG109, is used for early gene expression.

The protein localises to the virion. The enzyme catalyses RNA(n) + a ribonucleoside 5'-triphosphate = RNA(n+1) + diphosphate. Part of the DNA-dependent RNA polymerase which catalyzes the transcription of viral DNA into RNA using the four ribonucleoside triphosphates as substrates. Responsible for the transcription of early, intermediate and late genes. DNA-dependent RNA polymerase associates with the early transcription factor (ETF), itself composed of OPG118 and OPG133, thereby allowing the early genes transcription. Late transcription, and probably also intermediate transcription, require newly synthesized RNA polymerase. The polypeptide is DNA-directed RNA polymerase 19 kDa subunit (OPG131) (Homo sapiens (Human)).